The following is a 287-amino-acid chain: Nucleotide-binding protein Asuc_0930 (287 aa).

Glycine 8–serine 15 lines the ATP pocket. A GTP-binding site is contributed by aspartate 56–asparagine 59.

It belongs to the RapZ-like family.

Functionally, displays ATPase and GTPase activities. This chain is Nucleotide-binding protein Asuc_0930, found in Actinobacillus succinogenes (strain ATCC 55618 / DSM 22257 / CCUG 43843 / 130Z).